Here is a 442-residue protein sequence, read N- to C-terminus: 3-phosphoshikimate 1-carboxyvinyltransferase (442 aa).

Lys-27, Ser-28, and Arg-32 together coordinate 3-phosphoshikimate. Residue Lys-27 participates in phosphoenolpyruvate binding. Phosphoenolpyruvate contacts are provided by Gly-100 and Arg-128. 3-phosphoshikimate contacts are provided by Ser-174, Ser-175, Gln-176, Ser-204, Asp-321, and Lys-348. Gln-176 provides a ligand contact to phosphoenolpyruvate. The Proton acceptor role is filled by Asp-321. Arg-352, Arg-394, and Lys-424 together coordinate phosphoenolpyruvate.

It belongs to the EPSP synthase family. Monomer.

Its subcellular location is the cytoplasm. The enzyme catalyses 3-phosphoshikimate + phosphoenolpyruvate = 5-O-(1-carboxyvinyl)-3-phosphoshikimate + phosphate. It participates in metabolic intermediate biosynthesis; chorismate biosynthesis; chorismate from D-erythrose 4-phosphate and phosphoenolpyruvate: step 6/7. Functionally, catalyzes the transfer of the enolpyruvyl moiety of phosphoenolpyruvate (PEP) to the 5-hydroxyl of shikimate-3-phosphate (S3P) to produce enolpyruvyl shikimate-3-phosphate and inorganic phosphate. The chain is 3-phosphoshikimate 1-carboxyvinyltransferase from Herminiimonas arsenicoxydans.